The chain runs to 1086 residues: MANLLKTVVTGCSCPFLSNLGSCKVLPGKKNFLRTFHTHRILWCSAPVKPGIPYKQLTVGVPKEIFQNEKRVALSPAGVQALVKQGFNVVVESGAGEASKFSDDHYRAAGAQIQGAKEVLASDLVVKVRAPMLNPTLGVHEADLLKTSGTLISFIYPAQNPDLLNKLSKRKTTVLAMDQVPRVTIAQGYDALSSMANIAGYKAVVLAANHFGRFFTGQITAAGKVPPAKILIVGGGVAGLASAGAAKSMGAIVRGFDTRAAALEQFKSLGAEPLEVDLKESGEGQGGYAKEMSKEFIEAEMKLFAQQCKEVDILISTALIPGKKAPILFNKEMIESMKEGSVVVDLAAEAGGNFETTKPGELYVHKGITHIGYTDLPSRMATQASTLYSNNITKLLKAISPDKDNFYFEVKDDFDFGTMGHVIRGTVVMKDGQVIFPAPTPKNIPQGAPVKQKTVAELEAEKAATITPFRKTMTSASVYTAGLTGILGLGIAAPNLAFSQMVTTFGLAGIVGYHTVWGVTPALHSPLMSVTNAISGLTAVGGLVLMGGHLYPSTTSQGLAALATFISSVNIAGGFLVTQRMLDMFKRPTDPPEYNYLYLLPAGTFVGGYLASLYSGYNIEQIMYLGSGLCCVGALAGLSTQGTARLGNALGMIGVAGGLAATLGGLKPCPELLAQMSGAMALGGTIGLTIAKRIQISDLPQLVAAFHSLVGLAAVLTCIAEYIIEYPHFATDAAANLTKIVAYLGTYIGGVTFSGSLVAYGKLQGILKSAPLLLPGRHLLNAGLLAGSVGGIIPFMMDPSFTTGITCLGSVSALSAVMGVTLTAAIGGADMPVVITVLNSYSGWALCAEGFLLNNNLLTIVGALIGSSGAILSYIMCVAMNRSLANVILGGYGTTSTAGGKPMEISGTHTEINLDNAIDMIREANSIIITPGYGLCAAKAQYPIADLVKMLSEQGKKVRFGIHPVAGRMPGQLNVLLAEAGVPYDIVLEMDEINHDFPDTDLVLVIGANDTVNSAAQEDPNSIIAGMPVLEVWKSKQVIVMKRSLGVGYAAVDNPIFYKPNTAMLLGDAKKTCDALQAKVRESYQK.

Residues 1 to 43 (MANLLKTVVTGCSCPFLSNLGSCKVLPGKKNFLRTFHTHRILW) constitute a mitochondrion transit peptide. The Mitochondrial matrix portion of the chain corresponds to 44–474 (CSAPVKPGIP…TITPFRKTMT (431 aa)). Lys70 is subject to N6-acetyllysine. Lys117 is subject to N6-succinyllysine. 182 to 184 (RVT) contacts NAD(+). Lys224 carries the N6-succinyllysine modification. NAD(+)-binding positions include Val237, 257-259 (DTR), and Gly287. The residue at position 294 (Lys294) is an N6-succinyllysine. NAD(+)-binding residues include Glu300 and Leu319. Lys331 is modified (N6-succinyllysine). An N6-acetyllysine modification is found at Lys397. 4 helical membrane-spanning segments follow: residues 475-493 (SASV…GIAA), 501-521 (MVTT…GVTP), 527-546 (LMSV…LVLM), and 558-578 (GLAA…FLVT). Residues 579-595 (QRMLDMFKRPTDPPEYN) are Mitochondrial matrix-facing. Transmembrane regions (helical) follow at residues 596 to 616 (YLYL…LYSG), 622 to 642 (IMYL…STQG), 646 to 666 (LGNA…LGGL), 672 to 691 (LLAQ…LTIA), and 702 to 722 (LVAA…IAEY). Topologically, residues 723–739 (IIEYPHFATDAAANLTK) are cytoplasmic. 5 helical membrane-spanning segments follow: residues 740–760 (IVAY…LVAY), 778–797 (HLLN…PFMM), 801–819 (FTTG…AVMG), 833–853 (VVIT…GFLL), and 857–879 (LLTI…MCVA). Over 880–1086 (MNRSLANVIL…QAKVRESYQK (207 aa)) the chain is Mitochondrial matrix. NADP(+)-binding positions include Tyr933, 965 to 970 (VAGRMP), 1009 to 1011 (NDT), 1026 to 1027 (GM), 1042 to 1049 (KRSLGVGY), and 1068 to 1069 (DA). Lys1079 bears the N6-succinyllysine mark.

It in the N-terminal section; belongs to the AlaDH/PNT family. In the C-terminal section; belongs to the PNT beta subunit family. As to quaternary structure, homodimer.

It localises to the mitochondrion inner membrane. It catalyses the reaction NAD(+) + NADPH + H(+)(in) = NADH + NADP(+) + H(+)(out). The transhydrogenation between NADH and NADP is coupled to respiration and ATP hydrolysis and functions as a proton pump across the membrane. May play a role in reactive oxygen species (ROS) detoxification in the adrenal gland. The sequence is that of NAD(P) transhydrogenase, mitochondrial (NNT) from Bos taurus (Bovine).